Reading from the N-terminus, the 480-residue chain is Probable WRKY transcription factor 61 (480 aa).

Residues 30-108 (NQLMAKHNEP…RNYDDNEKSS (79 aa)) are disordered. Composition is skewed to basic and acidic residues over residues 57–66 (REKVNEREEL) and 84–106 (NKEE…DNEK). A DNA-binding region (WRKY) is located at residues 185–251 (CETPTMNDGC…YEGTHNHPLP (67 aa)).

Its subcellular location is the nucleus. Transcription factor. Interacts specifically with the W box (5'-(T)TGAC[CT]-3'), a frequently occurring elicitor-responsive cis-acting element. This is Probable WRKY transcription factor 61 (WRKY61) from Arabidopsis thaliana (Mouse-ear cress).